Reading from the N-terminus, the 155-residue chain is Arginine repressor (155 aa).

It belongs to the ArgR family.

It is found in the cytoplasm. It participates in amino-acid biosynthesis; L-arginine biosynthesis [regulation]. Its function is as follows. Regulates arginine biosynthesis genes. This chain is Arginine repressor, found in Histophilus somni (strain 2336) (Haemophilus somnus).